A 54-amino-acid polypeptide reads, in one-letter code: MDNALLSLTHEQQQAAVEQIQELMAQGVSSGEAIQIIANRLREAHQNNTSENNS.

This sequence belongs to the UPF0181 family.

The sequence is that of UPF0181 protein APJL_0874 from Actinobacillus pleuropneumoniae serotype 3 (strain JL03).